The chain runs to 131 residues: Insulin-like 3 (131 aa).

A signal peptide spans 1–24 (MDPRLPAWALVLLGPALVFALGPA). Intrachain disulfides connect Cys-34-Cys-117, Cys-46-Cys-130, and Cys-116-Cys-121. Residues 58–104 (PVAAGDGELLQWLERRHLLYGLVANSEPAPGGPGLQPMPQTSHHHRH) constitute a propeptide, c peptide like. A disordered region spans residues 86 to 105 (APGGPGLQPMPQTSHHHRHR).

Belongs to the insulin family. In terms of assembly, heterodimer of a B chain and an A chain linked by two disulfide bonds. In terms of tissue distribution, highest expression in the Leydig cells of the testis.

It localises to the secreted. Its function is as follows. Seems to play a role in testicular function. May be a trophic hormone with a role in testicular descent in fetal life. Is a ligand for LGR8 receptor. The chain is Insulin-like 3 (INSL3) from Callithrix jacchus (White-tufted-ear marmoset).